The sequence spans 107 residues: C-X-C motif chemokine 3 (107 aa).

The signal sequence occupies residues methionine 1 to glycine 34. 2 disulfides stabilise this stretch: cysteine 43/cysteine 69 and cysteine 45/cysteine 85.

The protein belongs to the intercrine alpha (chemokine CxC) family. N-terminal processed form GRO-gamma(5-73) is produced by proteolytic cleavage after secretion from peripheral blood monocytes.

Its subcellular location is the secreted. Functionally, ligand for CXCR2. Has chemotactic activity for neutrophils. May play a role in inflammation and exert its effects on endothelial cells in an autocrine fashion. In vitro, the processed form GRO-gamma(5-73) shows a fivefold higher chemotactic activity for neutrophilic granulocytes. This chain is C-X-C motif chemokine 3 (CXCL3), found in Homo sapiens (Human).